The primary structure comprises 89 residues: Small ribosomal subunit protein uS14A (89 aa).

Belongs to the universal ribosomal protein uS14 family. As to quaternary structure, part of the 30S ribosomal subunit. Contacts proteins S3 and S10.

Functionally, binds 16S rRNA, required for the assembly of 30S particles and may also be responsible for determining the conformation of the 16S rRNA at the A site. In Streptococcus equi subsp. zooepidemicus (strain MGCS10565), this protein is Small ribosomal subunit protein uS14A.